Here is a 208-residue protein sequence, read N- to C-terminus: Guanylate kinase (208 aa).

A Guanylate kinase-like domain is found at 4-182 (GQLYIISAPS…ALEELKSVFR (179 aa)). 11–18 (APSGAGKT) serves as a coordination point for ATP.

The protein belongs to the guanylate kinase family.

It is found in the cytoplasm. It carries out the reaction GMP + ATP = GDP + ADP. Its function is as follows. Essential for recycling GMP and indirectly, cGMP. The chain is Guanylate kinase from Hahella chejuensis (strain KCTC 2396).